The chain runs to 166 residues: MRLILLSSLLLLGIFLANGHEEDPDGKVLNSLIDSLMHLQREFANLKDAFLTVHRARSFGSGSERLYVTNKEIKNFEALRQICEQAEGHIPSPQLENQNKAFANVLERHGKEAYLVVGDSANFTNWAAGEPNKAAGTCVKADTHGSWHSASCDDNRLVVCEFYFIL.

An N-terminal signal peptide occupies residues 1 to 19 (MRLILLSSLLLLGIFLANG). Residues 46–161 (LKDAFLTVHR…CDDNRLVVCE (116 aa)) enclose the C-type lectin domain. Intrachain disulfides connect cysteine 83–cysteine 160 and cysteine 138–cysteine 152. Asparagine 122 carries an N-linked (GlcNAc...) asparagine glycan.

This sequence belongs to the alpha-type phospholipase A2 inhibitor family. Homotrimer; non-covalently linked. As to expression, expressed by the liver.

Its subcellular location is the secreted. Functionally, this phospholipase A2 inhibitor binds directly phospholipase A2 in the presence or absence of calcium. This Bothrops moojeni (Lance-headed viper) protein is Phospholipase A2 inhibitor clone 04.